We begin with the raw amino-acid sequence, 1311 residues long: DENN domain-containing protein 5B (1311 aa).

Residues 53-270 enclose the uDENN domain; that stretch reads ATAAGENFDQ…EVPLPASGRS (218 aa). Residues 154 to 165 show a composition bias toward polar residues; the sequence is QAEHNTSAQNCT. Residues 154-201 are disordered; it reads QAEHNTSAQNCTSSSSSSSSSSSSSSMDSLSSSLDDVDSPSAHGGRRT. Residues 166 to 187 show a composition bias toward low complexity; sequence SSSSSSSSSSSSSSMDSLSSSL. Residues 289-452 enclose the cDENN domain; that stretch reads ELPLADFPLA…AVMSLQTSVL (164 aa). The 166-residue stretch at 454–619 folds into the dDENN domain; sequence KELKSTSLRE…DNKIMSQWEE (166 aa). The 161-residue stretch at 809 to 969 folds into the RUN 1 domain; sequence LEENTLIASL…DYFCFTSVFT (161 aa). The disordered stretch occupies residues 854–874; that stretch reads EQQLESPVSNGQERRKTESSV. A helical transmembrane segment spans residues 962 to 982; that stretch reads FCFTSVFTTIMIPYRAVIIPI. Residues 973–1081 form the PLAT domain; the sequence is IPYRAVIIPI…DDGSLERVLI (109 aa). The RUN 2 domain maps to 1155 to 1306; sequence TVLLCGEGGL…FPITLETSLT (152 aa).

This sequence belongs to the RAB6IP1 family.

It localises to the membrane. In terms of biological role, guanine nucleotide exchange factor (GEF) which may activate the small GTPases Rab. May promote the exchange of GDP to GTP, converting inactive GDP-bound Rab proteins into their active GTP-bound form. In Danio rerio (Zebrafish), this protein is DENN domain-containing protein 5B (dennd5b).